The primary structure comprises 301 residues: GTP cyclohydrolase FolE2 (301 aa).

The protein belongs to the GTP cyclohydrolase IV family.

It catalyses the reaction GTP + H2O = 7,8-dihydroneopterin 3'-triphosphate + formate + H(+). It participates in cofactor biosynthesis; 7,8-dihydroneopterin triphosphate biosynthesis; 7,8-dihydroneopterin triphosphate from GTP: step 1/1. Its function is as follows. Converts GTP to 7,8-dihydroneopterin triphosphate. This is GTP cyclohydrolase FolE2 from Pseudomonas syringae pv. syringae (strain B728a).